A 546-amino-acid polypeptide reads, in one-letter code: DDB1- and CUL4-associated factor 11 (546 aa).

Over residues 1–19 (MGSRNSSSAGSGSGDPSEG) the composition is skewed to low complexity. The interval 1–40 (MGSRNSSSAGSGSGDPSEGLTRRGAGLRRSEEEEEEDEDV) is disordered. Residue S75 is modified to Phosphoserine. WD repeat units follow at residues 170-210 (SYSQ…RKFK), 216-258 (DVGW…TALD), 263-302 (ERRF…RTLQ), 305-345 (SHED…EDDP), 353-392 (GHQD…SREG), 435-480 (GVLH…KKLT), and 481-520 (NHKA…YFQD). Positions 523-546 (PESEECASAPAPVPRSSTPFSSPQ) are disordered. Over residues 537 to 546 (RSSTPFSSPQ) the composition is skewed to polar residues.

Interacts with DDB1 and CUL4A.

It functions in the pathway protein modification; protein ubiquitination. May function as a substrate receptor for CUL4-DDB1 E3 ubiquitin-protein ligase complex. This is DDB1- and CUL4-associated factor 11 (DCAF11) from Pongo abelii (Sumatran orangutan).